Reading from the N-terminus, the 451-residue chain is Phosphoglucosamine mutase (451 aa).

The Phosphoserine intermediate role is filled by Ser-104. 4 residues coordinate Mg(2+): Ser-104, Asp-242, Asp-244, and Asp-246. Position 104 is a phosphoserine (Ser-104).

Belongs to the phosphohexose mutase family. The cofactor is Mg(2+). Post-translationally, activated by phosphorylation.

The enzyme catalyses alpha-D-glucosamine 1-phosphate = D-glucosamine 6-phosphate. Catalyzes the conversion of glucosamine-6-phosphate to glucosamine-1-phosphate. The chain is Phosphoglucosamine mutase from Kocuria rhizophila (strain ATCC 9341 / DSM 348 / NBRC 103217 / DC2201).